The sequence spans 266 residues: Putative pyruvate, phosphate dikinase regulatory protein (266 aa).

An ADP-binding site is contributed by G149–T156.

Belongs to the pyruvate, phosphate/water dikinase regulatory protein family. PDRP subfamily.

It catalyses the reaction N(tele)-phospho-L-histidyl/L-threonyl-[pyruvate, phosphate dikinase] + ADP = N(tele)-phospho-L-histidyl/O-phospho-L-threonyl-[pyruvate, phosphate dikinase] + AMP + H(+). It carries out the reaction N(tele)-phospho-L-histidyl/O-phospho-L-threonyl-[pyruvate, phosphate dikinase] + phosphate + H(+) = N(tele)-phospho-L-histidyl/L-threonyl-[pyruvate, phosphate dikinase] + diphosphate. In terms of biological role, bifunctional serine/threonine kinase and phosphorylase involved in the regulation of the pyruvate, phosphate dikinase (PPDK) by catalyzing its phosphorylation/dephosphorylation. This Geobacillus kaustophilus (strain HTA426) protein is Putative pyruvate, phosphate dikinase regulatory protein.